The sequence spans 266 residues: Outer membrane protein OmpK (266 aa).

The signal sequence occupies residues 1–20 (MRKSLLALSLLAATSAPVLA).

This sequence belongs to the nucleoside-specific channel-forming outer membrane porin (Tsx) (TC 1.B.10) family.

Its subcellular location is the cell outer membrane. In terms of biological role, serves as receptor for a broad-host-range vibriophage, KVP40. The polypeptide is Outer membrane protein OmpK (ompK) (Vibrio parahaemolyticus serotype O3:K6 (strain RIMD 2210633)).